Consider the following 58-residue polypeptide: Proteinase inhibitor PSKP-2 (58 aa).

The 58-residue stretch at 1 to 58 (VIEPDCKKYEGKKCPPDIALVCGTNGREYYNECALCVFIRDSTLKADKAIKIKKWGKC) folds into the Kazal-like domain. 3 disulfides stabilise this stretch: Cys6–Cys36, Cys14–Cys33, and Cys22–Cys58.

Skin.

It is found in the secreted. May have a role in mucosal defense against microbes by interacting directly with their membranes. The polypeptide is Proteinase inhibitor PSKP-2 (Phyllomedusa sauvagei (Sauvage's leaf frog)).